Here is a 182-residue protein sequence, read N- to C-terminus: Ribosome maturation factor RimP (182 aa).

It belongs to the RimP family.

Its subcellular location is the cytoplasm. Functionally, required for maturation of 30S ribosomal subunits. This Corynebacterium efficiens (strain DSM 44549 / YS-314 / AJ 12310 / JCM 11189 / NBRC 100395) protein is Ribosome maturation factor RimP.